Here is a 362-residue protein sequence, read N- to C-terminus: Inactive 2'-5' oligoadenylate synthetase 1C (362 aa).

This sequence belongs to the 2-5A synthase family. As to expression, expressed at highest level in brain with lesser amounts in spleen, kidney, stomach, liver, intestine, ovary, skin and testis. Not detected in lung, thymus, heart and uterus.

Does not have 2'-5'-OAS activity, but can bind double-stranded RNA. The sequence is that of Inactive 2'-5' oligoadenylate synthetase 1C from Mus musculus (Mouse).